Reading from the N-terminus, the 566-residue chain is Membrane protein insertase YidC (566 aa).

The next 5 helical transmembrane spans lie at 3–23 (IKRIILYVIVALLAIALFNAW), 346–366 (GWLWPISMLLFWILSSVHAVV), 369–389 (WGWSIIITTILIKIVFYWFSA), 436–456 (GGCLPMLIQVPVFIAFYYVII), and 509–529 (MWILPVIFTVFFINFPAGLVL).

This sequence belongs to the OXA1/ALB3/YidC family. Type 1 subfamily. In terms of assembly, interacts with the Sec translocase complex via SecD. Specifically interacts with transmembrane segments of nascent integral membrane proteins during membrane integration.

It localises to the cell inner membrane. In terms of biological role, required for the insertion and/or proper folding and/or complex formation of integral membrane proteins into the membrane. Involved in integration of membrane proteins that insert both dependently and independently of the Sec translocase complex, as well as at least some lipoproteins. Aids folding of multispanning membrane proteins. The polypeptide is Membrane protein insertase YidC (Coxiella burnetii (strain Dugway 5J108-111)).